We begin with the raw amino-acid sequence, 36 residues long: Pancreatic polypeptide (36 aa).

Tyr36 is subject to Tyrosine amide.

This sequence belongs to the NPY family.

Its subcellular location is the secreted. In terms of biological role, hormone secreted by pancreatic cells that acts as a regulator of pancreatic and gastrointestinal functions probably by signaling through the G protein-coupled receptor NPY4R2. This is Pancreatic polypeptide (PPY) from Equus przewalskii (Przewalski's horse).